The following is a 465-amino-acid chain: Trigger factor (465 aa).

Residues 164-245 (GDFVSIDLSA…VQSVKERELP (82 aa)) enclose the PPIase FKBP-type domain. Residues 430–465 (GNTVDTAEMFGEPAAEPEQADAAQAGDAEKAAADSE) are disordered. Positions 440–455 (GEPAAEPEQADAAQAG) are enriched in low complexity. Residues 456–465 (DAEKAAADSE) show a composition bias toward basic and acidic residues.

It belongs to the FKBP-type PPIase family. Tig subfamily.

Its subcellular location is the cytoplasm. It carries out the reaction [protein]-peptidylproline (omega=180) = [protein]-peptidylproline (omega=0). In terms of biological role, involved in protein export. Acts as a chaperone by maintaining the newly synthesized protein in an open conformation. Functions as a peptidyl-prolyl cis-trans isomerase. In Nocardia farcinica (strain IFM 10152), this protein is Trigger factor.